A 152-amino-acid polypeptide reads, in one-letter code: Protein Smg homolog (152 aa).

The protein belongs to the Smg family.

The sequence is that of Protein Smg homolog from Bordetella bronchiseptica (strain ATCC BAA-588 / NCTC 13252 / RB50) (Alcaligenes bronchisepticus).